A 124-amino-acid chain; its full sequence is Small ribosomal subunit protein uS12 (124 aa).

D89 bears the 3-methylthioaspartic acid mark. Residues 105–124 are disordered; it reads QGVKNRKQARSKYGAKMEKK.

Belongs to the universal ribosomal protein uS12 family. As to quaternary structure, part of the 30S ribosomal subunit. Contacts proteins S8 and S17. May interact with IF1 in the 30S initiation complex.

Functionally, with S4 and S5 plays an important role in translational accuracy. Interacts with and stabilizes bases of the 16S rRNA that are involved in tRNA selection in the A site and with the mRNA backbone. Located at the interface of the 30S and 50S subunits, it traverses the body of the 30S subunit contacting proteins on the other side and probably holding the rRNA structure together. The combined cluster of proteins S8, S12 and S17 appears to hold together the shoulder and platform of the 30S subunit. This is Small ribosomal subunit protein uS12 from Renibacterium salmoninarum (strain ATCC 33209 / DSM 20767 / JCM 11484 / NBRC 15589 / NCIMB 2235).